We begin with the raw amino-acid sequence, 418 residues long: L-rhamnose isomerase (418 aa).

His262, Asp294, and Asp296 together coordinate Mn(2+).

Belongs to the rhamnose isomerase family. Homotetramer. Requires Mn(2+) as cofactor.

Its subcellular location is the cytoplasm. The catalysed reaction is L-rhamnopyranose = L-rhamnulose. It functions in the pathway carbohydrate degradation; L-rhamnose degradation; glycerone phosphate from L-rhamnose: step 1/3. Catalyzes the interconversion of L-rhamnose and L-rhamnulose. The polypeptide is L-rhamnose isomerase (Yersinia pseudotuberculosis serotype IB (strain PB1/+)).